We begin with the raw amino-acid sequence, 454 residues long: Photosystem II CP47 reaction center protein (454 aa).

6 helical membrane passes run 6–26, 47–61, 86–102, 149–164, 183–198, and 403–418; these read MFVL…GWTI, IILS…IWHW, GIHL…FGAF, IAAG…FHLS, VLSS…AFVV, and SFAL…HGAR.

It belongs to the PsbB/PsbC family. PsbB subfamily. In terms of assembly, PSII is composed of 1 copy each of membrane proteins PsbA, PsbB, PsbC, PsbD, PsbE, PsbF, PsbH, PsbI, PsbJ, PsbK, PsbL, PsbM, PsbT, PsbX, PsbY, PsbZ, Psb30/Ycf12, at least 3 peripheral proteins of the oxygen-evolving complex and a large number of cofactors. It forms dimeric complexes. Binds multiple chlorophylls. PSII binds additional chlorophylls, carotenoids and specific lipids. serves as cofactor.

The protein localises to the plastid. The protein resides in the chloroplast thylakoid membrane. Functionally, one of the components of the core complex of photosystem II (PSII). It binds chlorophyll and helps catalyze the primary light-induced photochemical processes of PSII. PSII is a light-driven water:plastoquinone oxidoreductase, using light energy to abstract electrons from H(2)O, generating O(2) and a proton gradient subsequently used for ATP formation. The protein is Photosystem II CP47 reaction center protein of Ostreococcus tauri.